The following is a 23-amino-acid chain: ATEAQAAINEXPDRVKKDYFYGR.

In terms of assembly, complex I is composed of about 45 different subunits.

It localises to the mitochondrion inner membrane. It catalyses the reaction a ubiquinone + NADH + 5 H(+)(in) = a ubiquinol + NAD(+) + 4 H(+)(out). Transfer of electrons from NADH to the respiratory chain. The immediate electron acceptor for the enzyme is believed to be ubiquinone. This Solanum tuberosum (Potato) protein is NADH-ubiquinone oxidoreductase 29 kDa subunit.